The following is a 303-amino-acid chain: tRNA pseudouridine synthase B (303 aa).

Catalysis depends on Asp47, which acts as the Nucleophile.

It belongs to the pseudouridine synthase TruB family. Type 1 subfamily.

It catalyses the reaction uridine(55) in tRNA = pseudouridine(55) in tRNA. Functionally, responsible for synthesis of pseudouridine from uracil-55 in the psi GC loop of transfer RNAs. This chain is tRNA pseudouridine synthase B, found in Ruegeria pomeroyi (strain ATCC 700808 / DSM 15171 / DSS-3) (Silicibacter pomeroyi).